A 227-amino-acid polypeptide reads, in one-letter code: uncharacterized protein (227 aa).

The Response regulatory domain maps to 2-115 (KILMIEDNVS…TLVARIKAVI (114 aa)). A 4-aspartylphosphate modification is found at Asp-51. The ompR/PhoB-type DNA-binding region spans 128–226 (EDMIETECFT…VWGVGYKFDE (99 aa)).

Phosphorylated by YclK.

Its subcellular location is the cytoplasm. Its function is as follows. Could be member of the two-component regulatory system YclK/YclJ. This is an uncharacterized protein from Bacillus subtilis (strain 168).